The chain runs to 226 residues: MRRKSGCSAGLDDRSAYEEVVLDSMLYSARLKETVARGNSAVVVAMARLIAGVFETGGKLLICGNGGSAADAQHLATEFTIRYRSSVHRPALPAIALTTDSSALTAGANDLGYDEVFRRLVEAYGRPGDLLLGLSTSGNSRSVVHALDYARKHGMRTLALLGGDGGALKGLADLSVVVPHNGSADRVQECHITLGHVIIDLVERMMGYGTECNNQQNEQGYADQTD.

Residues 50–212 (IAGVFETGGK…ERMMGYGTEC (163 aa)) form the SIS domain. 65 to 67 (NGG) serves as a coordination point for substrate. Zn(2+)-binding residues include His-74 and Glu-78. Substrate is bound by residues Glu-78, 109–110 (ND), 135–137 (STS), Ser-140, and Gln-188. Zn(2+) contacts are provided by Gln-188 and His-196.

It belongs to the SIS family. GmhA subfamily. It depends on Zn(2+) as a cofactor.

It localises to the cytoplasm. The enzyme catalyses 2 D-sedoheptulose 7-phosphate = D-glycero-alpha-D-manno-heptose 7-phosphate + D-glycero-beta-D-manno-heptose 7-phosphate. It participates in carbohydrate biosynthesis; D-glycero-D-manno-heptose 7-phosphate biosynthesis; D-glycero-alpha-D-manno-heptose 7-phosphate and D-glycero-beta-D-manno-heptose 7-phosphate from sedoheptulose 7-phosphate: step 1/1. Functionally, catalyzes the isomerization of sedoheptulose 7-phosphate in D-glycero-D-manno-heptose 7-phosphate. In Chlorobium phaeobacteroides (strain DSM 266 / SMG 266 / 2430), this protein is Phosphoheptose isomerase.